The sequence spans 156 residues: CD-NTase-associated protein 8 (156 aa).

Belongs to the bacterial HORMA family. HORMA3 subfamily. Interacts with Cap7 (also called HORMA2) and CdnC; forms CdnD:Cap7:Cap8 (also called CdnD:HORMA2:HORMA3) complexes with stoichiometries of 1:1:1 and 2:1:1.

CBASS (cyclic oligonucleotide-based antiphage signaling system) provides immunity against bacteriophage. The CD-NTase protein synthesizes cyclic nucleotides in response to infection; these serve as specific second messenger signals. The signals activate a diverse range of effectors, leading to bacterial cell death and thus abortive phage infection. A type III-C(AAA) CBASS system. Its function is as follows. A member of the CBASS system in this bacteria. It does not seem to bind a closure peptide, its exact function is unknown. This is CD-NTase-associated protein 8 from Pseudomonas aeruginosa.